Here is a 597-residue protein sequence, read N- to C-terminus: Alpha-1,2-mannosyltransferase MNN2 (597 aa).

At 1-12 (MLLTKRFSKLFK) the chain is on the cytoplasmic side. The helical; Signal-anchor for type II membrane protein transmembrane segment at 13-28 (LTFIVLILCGLFVITN) threads the bilayer. The Extracellular segment spans residues 29–597 (KYMDENTSVK…STHDKAIAGK (569 aa)). N-linked (GlcNAc...) asparagine glycosylation is found at Asn34, Asn363, and Asn473.

The protein belongs to the MNN1/MNT family. Interacts with SVP26.

The protein resides in the golgi apparatus membrane. It participates in protein modification; protein glycosylation. Its function is as follows. Alpha-1,2-mannosyltransferase, responsible for addition of the first alpha-1,2-linked mannose to form the branches on the mannan backbone of oligosaccharides. The protein is Alpha-1,2-mannosyltransferase MNN2 (MNN2) of Saccharomyces cerevisiae (strain ATCC 204508 / S288c) (Baker's yeast).